The sequence spans 612 residues: MASMSVDPVTEPRMYQQTLLQDGLCDLLDANKFVDCILKIKDKEFPCHRLVLAATSPYFKAMFLSDLEESKKREIVLKDIEPGVMGMILRYIYTSDINLTEQNVQDIFMAANMYQIPSIFSVCVSYLQQKLVLSNCLAIFRLGLLLDCPRLAMEARDFICDRYLLIIRDQDFHQLGPSELAAIITCDSLNVEREESVFESLMDWVEYDTDERTKELPELLHCVRFRLMPTSYFKEKVEGHRLIRTNQELKKELQLIKDAQKGLLHRVKRSSHRKEGKSAEFESDDDDEDGLLPGILNDNPRFGMFQSDLILMINDAGTVAYDVGANECFVASSSTEIPKNHCSLVTKENQIFVVGGLRYNEENKDQPFSSYFLQFDPMSSEWLGMPSLPNPRCLFGLVEAENSIYVVGGKELKEGERALDSVMIYDRQSFKWGESDPLPYAVYGHGIVSHKGLVYVIGGKTESKKCLRRVCVYDPSKFEWKDLAPMKTARSLFGTAVHKNKIYVVTGVTDNGLTSTVEVYDIASNSWSEFVDFPQERSSLNLVELGGFLYAIGGFAMMPNETTEKLEPTEMNDIWKFDEEENCWNGILREIRYAAGATVLGVRLNTLRLTKI.

One can recognise a BTB domain in the interval 34–101 (VDCILKIKDK…IYTSDINLTE (68 aa)). A BACK domain is found at 136-238 (CLAIFRLGLL…PTSYFKEKVE (103 aa)). Positions 266 to 275 (RVKRSSHRKE) are enriched in basic residues. Residues 266 to 290 (RVKRSSHRKEGKSAEFESDDDDEDG) are disordered. Positions 281-290 (FESDDDDEDG) are enriched in acidic residues. 5 Kelch repeats span residues 350–402 (QIFV…EAEN), 403–452 (SIYV…SHKG), 453–500 (LVYV…VHKN), 502–547 (IYVV…ELGG), and 549–604 (LYAI…GVRL).

It belongs to the KLHL40 family. In terms of assembly, component of the BCR(KLHL40) E3 ubiquitin ligase complex. As to expression, expressed in skeletal muscle and heart. Detected, although at much lower levels, in brain, eye and fin.

Its subcellular location is the cytoplasm. It localises to the myofibril. It is found in the sarcomere. The protein localises to the a band. The protein resides in the i band. In terms of biological role, substrate-specific adapter of a BCR (BTB-CUL3-RBX1) E3 ubiquitin ligase complex. Required for skeletal muscle development. The protein is Kelch-like protein 40a (klhl40a) of Danio rerio (Zebrafish).